We begin with the raw amino-acid sequence, 133 residues long: MIVGLGTDIVEIARIADKVPAAGDEAALAKCPLAKRVLTQAEMAIFVASSQPGRYLAKRFAAKEAAAKALGTGIGRGVSFQHIEISNDANGAPLIAFQGGAAERLSLLGGSRAHLSIADEKHYATATVILESN.

The Mg(2+) site is built by Asp-8 and Glu-64.

Belongs to the P-Pant transferase superfamily. AcpS family. It depends on Mg(2+) as a cofactor.

It localises to the cytoplasm. The enzyme catalyses apo-[ACP] + CoA = holo-[ACP] + adenosine 3',5'-bisphosphate + H(+). In terms of biological role, transfers the 4'-phosphopantetheine moiety from coenzyme A to a Ser of acyl-carrier-protein. The sequence is that of Holo-[acyl-carrier-protein] synthase from Shewanella loihica (strain ATCC BAA-1088 / PV-4).